The following is a 381-amino-acid chain: MTAATLFTQQTTPQFDKASIDTDVNHHAKTTAIEAMLYDDSDDRNDDFMDEQADKILADTQSLTESAYFRKLQKKLRRQVSWAIRDFNMIEDGDVVMVCVSGGKDSYTLLDILLLLKRIAPIHFDIVAVNLDQKQPGYPEEVLPAYLNEQGIAHYILEKDTYSIVKSVVPEGKTYCSACSRLRRGSLYGFAKQIGATKIALGHHRDDMLATFFLNLFHGGALKSMPPKLLSDDKQNMLIRPLAYVEEKDIIEYARLKEFPIIPCNLCGSQTNLQRAIINDMLREWDDAHPQRLASIFKAMQNVAPSQLADRELFDFETLSLERDDNERLFEGDNIQAGQIESLAEIGLPVAPATQIFNPNFVDTEKGSHTPKKIPTINPVI.

The PP-loop motif motif lies at 101–106 (SGGKDS). Positions 176, 179, and 267 each coordinate [4Fe-4S] cluster.

The protein belongs to the TtcA family. As to quaternary structure, homodimer. The cofactor is Mg(2+). Requires [4Fe-4S] cluster as cofactor.

The protein resides in the cytoplasm. It catalyses the reaction cytidine(32) in tRNA + S-sulfanyl-L-cysteinyl-[cysteine desulfurase] + AH2 + ATP = 2-thiocytidine(32) in tRNA + L-cysteinyl-[cysteine desulfurase] + A + AMP + diphosphate + H(+). The protein operates within tRNA modification. In terms of biological role, catalyzes the ATP-dependent 2-thiolation of cytidine in position 32 of tRNA, to form 2-thiocytidine (s(2)C32). The sulfur atoms are provided by the cysteine/cysteine desulfurase (IscS) system. The polypeptide is tRNA-cytidine(32) 2-sulfurtransferase (Psychrobacter arcticus (strain DSM 17307 / VKM B-2377 / 273-4)).